We begin with the raw amino-acid sequence, 356 residues long: Activating signal cointegrator 1 complex subunit 1 (356 aa).

The interval 1–52 (MDVLRPQIVTFDGRNYRKNPIQEKQYQHEEDEDFYPDSMEYSDEPCGAYEVA) is required for interaction with ASCC3. Residues 57–119 (GFRATVSAPS…NGVVSARTRI (63 aa)) form the KH domain.

As to quaternary structure, identified in the ASCC complex that contains ASCC1, ASCC2 and ASCC3. Interacts directly with ASCC3. The ASCC complex interacts with ALKBH3. Part of the ASC-1 complex, that contains TRIP4, ASCC1, ASCC2 and ASCC3. Interacts with CSRP1. Interacts with ZCCHC4. Expressed in the spinal cord, brain, paraspinal ganglia, thyroid, and submandibular glands.

Its subcellular location is the nucleus. The protein resides in the nucleus speckle. Functionally, plays a role in DNA damage repair as component of the ASCC complex. Part of the ASC-1 complex that enhances NF-kappa-B, SRF and AP1 transactivation. In cells responding to gastrin-activated paracrine signals, it is involved in the induction of SERPINB2 expression by gastrin. May also play a role in the development of neuromuscular junction. This chain is Activating signal cointegrator 1 complex subunit 1 (Ascc1), found in Mus musculus (Mouse).